The chain runs to 298 residues: Proline-rich protein 32 (298 aa).

Positions 36–56 are disordered; it reads CLSSKPEDDAEPWGQPQVPLR.

The sequence is that of Proline-rich protein 32 (PRR32) from Homo sapiens (Human).